The sequence spans 305 residues: Elongation factor Ts (305 aa).

Residues 79-82 (TDFV) are involved in Mg(2+) ion dislocation from EF-Tu.

This sequence belongs to the EF-Ts family.

The protein localises to the cytoplasm. Functionally, associates with the EF-Tu.GDP complex and induces the exchange of GDP to GTP. It remains bound to the aminoacyl-tRNA.EF-Tu.GTP complex up to the GTP hydrolysis stage on the ribosome. This Brucella suis biovar 1 (strain 1330) protein is Elongation factor Ts.